A 406-amino-acid polypeptide reads, in one-letter code: MTLFCEQVPYPRLAEAFGTPLYVYSQSALTEAFEHYQTAFAELSPLVCYAVKANGNLSIIKHFASLGSGFDIVSGGELARVLAAGGDAAKTIFSGVGKSEAEIEFALNAGVKCFNMESIPEIDRIQKVAARLGKTASVSLRVNPDVDAKTHPYISTGLKANKFGIAYADALEAYRHAAQQPNLKIIGIDCHIGSQLTDLSPLVEACERILILVDALAAEGIVLEHLDLGGGVGIVYQDEDVPDLGAYAQAVQKLIGTRRLKLILEPGRSLVGNAGALLTRVEFVKYGEEKNFVMVDAAMNDLMRPALYDAYHHIEAVEPKNIAPLTANIVGPICETGDFLGKDRTIACEEGDLLLIRSAGAYGASMASNYNARNRAAEVLVDGNEYRLIRRRETLEQQMANELACL.

At lysine 52 the chain carries N6-(pyridoxal phosphate)lysine. Pyridoxal 5'-phosphate is bound by residues glycine 231 and 265 to 268 (EPGR). Substrate contacts are provided by arginine 268, arginine 304, and tyrosine 308. Residue cysteine 334 is the Proton donor of the active site. Positions 335 and 362 each coordinate substrate. Pyridoxal 5'-phosphate is bound at residue tyrosine 362.

Belongs to the Orn/Lys/Arg decarboxylase class-II family. LysA subfamily. Homodimer. Pyridoxal 5'-phosphate is required as a cofactor.

The catalysed reaction is meso-2,6-diaminopimelate + H(+) = L-lysine + CO2. Its pathway is amino-acid biosynthesis; L-lysine biosynthesis via DAP pathway; L-lysine from DL-2,6-diaminopimelate: step 1/1. Functionally, specifically catalyzes the decarboxylation of meso-diaminopimelate (meso-DAP) to L-lysine. This is Diaminopimelate decarboxylase from Neisseria meningitidis serogroup A / serotype 4A (strain DSM 15465 / Z2491).